The primary structure comprises 307 residues: N-acetylglucosamine-1-phosphotransferase subunit gamma (307 aa).

The signal sequence occupies residues 1-24; it reads MAGRLAGFLMLLGLASQGPAPAYA. An MRH domain is found at 69 to 171; sequence GKCFSLVEST…TFETPLVCHP (103 aa). A disulfide bridge links Cys-71 with Cys-84. N-linked (GlcNAc...) asparagine glycans are attached at residues Asn-88 and Asn-115. Disulfide bonds link Cys-129–Cys-157 and Cys-142–Cys-169. One can recognise a DMAP1-binding domain in the interval 176 to 279; the sequence is VYPTLSEALQ…HTQPTETTHS (104 aa).

Homodimer; disulfide-linked. Hexamer of two alpha (GNPTAB), two beta (GNPTAB) and two gamma (GNPTG) subunits; disulfide-linked. The alpha and/or the beta subunits of the enzyme constitute the catalytic subunits. In terms of processing, cys-245 mediates the formation of the interchain disulfide bond for formation of the homodimer. Cys-142, Cys-157 and Cys-169 are involved in intramolecular disulfide bonds formation. Widely expressed. Highly expressed in the liver, intestine, brain, thymus, testis and ovary.

The protein resides in the secreted. The protein localises to the golgi apparatus. Functionally, non-catalytic subunit of the N-acetylglucosamine-1-phosphotransferase complex, an enzyme that catalyzes the formation of mannose 6-phosphate (M6P) markers on high mannose type oligosaccharides in the Golgi apparatus. Binds and presents the high mannose glycans of the acceptor to the catalytic alpha and beta subunits (GNPTAB). Enhances the rate of N-acetylglucosamine-1-phosphate transfer to the oligosaccharides of acid hydrolase acceptors. This is N-acetylglucosamine-1-phosphotransferase subunit gamma (Gnptg) from Mus musculus (Mouse).